The chain runs to 942 residues: MDFLRLRLPGLHQALRGALDSFSAFVSYLVGDTVPTVERQTQAAEELGEVTEGKVVGEEAQEVLEGLRSGQSEGVEAPEETRRCQEGSLAGEQTWGWRADSSARPQAERQDTGSWKAAEDARGQEPSVPLKPEAEPGTHRDRSSNTAQEIWEHGEEEASSGEPLRTCEQKEEEEEVVRAAESGMAEGVESQPTWHSEPGGNAGTEGQHVTEDSKEIDWVAKDMVAEIEWFGAKGIDKEEERMVPMRDGERARAQGTQCPGAESEDQAMLSREAWTVSDREGADSLGVQGTEYGSDPGDNFPGTTGRVWVLEEADKGDQQDEVDEKREAEVRFPIQTLEAERTGEMTEGHIAEEEAMGEQETEGSFEDEERQDLAIRDNGVSLEEEVRAEESSREKRNSWATEPTLVLDTEAKDEPDWEDSPEVSTEELFVGERSEAAQMTPEVLRVKVTEGQDPELVRHSQALTKQLEEGQKGQEETSGAPDLSPERVLSLKEYPGPVGFAGPELEAWGNWSRGVDRRNSQEVKADAEAGKEQTATEQAVEIRAEGGQEAQQPEVFGSGGEEALTSVALNPELEGSQGAEAGTEESVEESKPTENEAAEEEAVVPWEADGTCRKRRLEEVTLSLQDSEDTETSYLAEEIIVGIRAVDTEEGPKWEAGLAPETELGKAWCSEGRGEAGRGTELEETTEKQSGQEVGLVGSAEKVSGYDIQEIDGTEEGEQAEMETSVMAEDIRGTDGVTLGSQAERAEGSITPMETEGLLRDQMLLEEEAGGGQSREQKVHNSEGEIQTLDDSSDQEGQQTHQIPTVAVPGPLESAEATAGAPGDVHSNWNEALLPGSRLDVSVPRSRVLLSRSSSRRRSRPSFHRISVPEPQCDPPSPQPQAERPVPEQSSLQLEETPELSATKPEGTPVPARRKMLGRGFGFAHPGMMQELQARLSQPKPQ.

5 disordered regions span residues 66 to 212 (GLRS…VTED), 240 to 269 (ERMVPMRDGERARAQGTQCPGAESEDQAML), 283 to 487 (DSLG…SPER), 501 to 607 (AGPE…VPWE), and 671 to 942 (EGRG…PKPQ). Composition is skewed to basic and acidic residues over residues 106–123 (QAERQDTGSWKAAEDARG), 132–143 (PEAEPGTHRDRS), 240–252 (ERMVPMRDGERAR), 312–330 (EADKGDQQDEVDEKREAEV), and 338–352 (EAERTGEMTEGHIAE). Positions 353-370 (EEAMGEQETEGSFEDEER) are enriched in acidic residues. Serine 364 is modified (phosphoserine). Positions 384-397 (EEVRAEESSREKRN) are enriched in basic and acidic residues. Residues 415–425 (PDWEDSPEVST) are compositionally biased toward acidic residues. Composition is skewed to basic and acidic residues over residues 444–458 (LRVKVTEGQDPELVR) and 466–475 (QLEEGQKGQE). Residues serine 484 and serine 520 each carry the phosphoserine modification. 2 stretches are compositionally biased toward basic and acidic residues: residues 514–531 (GVDRRNSQEVKADAEAGK) and 672–687 (GRGEAGRGTELEETTE). Residues 709-721 (QEIDGTEEGEQAE) are compositionally biased toward acidic residues. Residues 837–853 (SRLDVSVPRSRVLLSRS) are compositionally biased toward low complexity. Residues 854-863 (SSRRRSRPSF) show a composition bias toward basic residues.

As to quaternary structure, homodimer. Post-translationally, there are 2 forms in macrophages, the membrane-binding proteins 200 kDa (MBP 200) and 235 kDa (MBP 235), that can be reduced into a single active ligand-binding species with intermediate mobility (MBP 200R). In terms of tissue distribution, highly expressed in spleen, lung and skeletal muscle, and weakly in brain, heart, kidney, and testis.

The protein localises to the cell membrane. In terms of biological role, macrophage receptor that binds to the apolipoprotein B48 (APOB) of dietary triglyceride (TG)-rich lipoproteins (TRL) or to a like domain of APOB in hypertriglyceridemic very low density lipoprotein (HTG-VLDL). Binds and internalizes TRL when out of the context of the macrophage. May provide essential lipids to reticuloendothelial cells. Could also be involved in foam cell formation with elevated TRL and remnant lipoprotein (RLP). Mediates the rapid high-affinity uptake of chylomicrons (CM), HTG-VLDL, and trypsinized (tryp) VLDL devoid of APOE in vitro in macrophages. This chain is Apolipoprotein B receptor, found in Mus musculus (Mouse).